The chain runs to 123 residues: Class II hydrophobin 2 (123 aa).

The N-terminal stretch at Met1–Gly16 is a signal peptide. 4 disulfides stabilise this stretch: Cys22–Cys70, Cys32–Cys61, Cys33–Cys45, and Cys71–Cys82.

Belongs to the cerato-ulmin hydrophobin family. As to quaternary structure, homodimer. Homodimers further self-assemble to form highly ordered films at water-air interfaces through intermolecular interactions.

The protein resides in the secreted. The protein localises to the cell wall. Aerial growth, conidiation, and dispersal of filamentous fungi in the environment rely upon a capability of their secreting small amphipathic proteins called hydrophobins (HPBs) with low sequence identity. Class I can self-assemble into an outermost layer of rodlet bundles on aerial cell surfaces, conferring cellular hydrophobicity that supports fungal growth, development and dispersal; whereas Class II form highly ordered films at water-air interfaces through intermolecular interactions but contribute nothing to the rodlet structure. Hyd2 is a class II hydrophobin that plays probably a role in intraspecific signaling or hyphal fusion. Not necessary for root adhesion and colonization. Might play an essential role since no deletion mutants could be obtained. The protein is Class II hydrophobin 2 of Bionectria ochroleuca (Gliocladium roseum).